The following is a 671-amino-acid chain: UvrABC system protein B (671 aa).

Residues 25–412 (EGIDAGLAHQ…AGRIVEQVVR (388 aa)) enclose the Helicase ATP-binding domain. ATP is bound at residue 38-45 (GVTGSGKT). Positions 91-114 (YYDYYQPEAYVPSSDTFIEKDASI) match the Beta-hairpin motif. Residues 429-582 (QVDDLLSEIH…QIAFNLEHGI (154 aa)) enclose the Helicase C-terminal domain. Residues 601-624 (PGSRSKKRKGMAKAAEENARYENE) are disordered. Positions 614–624 (AAEENARYENE) are enriched in basic and acidic residues. The 36-residue stretch at 632-667 (NKRIRQLEEKMYQLARDLEFEAAAQMRDEIGKLRER) folds into the UVR domain.

The protein belongs to the UvrB family. In terms of assembly, forms a heterotetramer with UvrA during the search for lesions. Interacts with UvrC in an incision complex.

It is found in the cytoplasm. Functionally, the UvrABC repair system catalyzes the recognition and processing of DNA lesions. A damage recognition complex composed of 2 UvrA and 2 UvrB subunits scans DNA for abnormalities. Upon binding of the UvrA(2)B(2) complex to a putative damaged site, the DNA wraps around one UvrB monomer. DNA wrap is dependent on ATP binding by UvrB and probably causes local melting of the DNA helix, facilitating insertion of UvrB beta-hairpin between the DNA strands. Then UvrB probes one DNA strand for the presence of a lesion. If a lesion is found the UvrA subunits dissociate and the UvrB-DNA preincision complex is formed. This complex is subsequently bound by UvrC and the second UvrB is released. If no lesion is found, the DNA wraps around the other UvrB subunit that will check the other stand for damage. This chain is UvrABC system protein B, found in Pseudomonas syringae pv. syringae (strain B728a).